Here is a 2365-residue protein sequence, read N- to C-terminus: Voltage-dependent T-type calcium channel subunit alpha-1H (2365 aa).

Positions 1–63 (MTEGTLAADE…PGTECGADLG (63 aa)) are disordered. The Cytoplasmic portion of the chain corresponds to 1–100 (MTEGTLAADE…SWCLRLVSRR (100 aa)). The span at 16 to 36 (GASPSAPAAPVRASPASPGVP) shows a compositional bias: low complexity. An I repeat occupies 87–422 (TRPRSWCLRL…LCLVVIATQF (336 aa)). The helical transmembrane segment at 101-119 (WFEHISMLVIMLNCVTLGM) threads the bilayer. At 120-141 (FRPCEDVECRSERCSILEAFDD) the chain is on the extracellular side. Zn(2+) is bound at residue Asp140. Residues 142 to 160 (FIFAFFAVEMVIKMVALGL) form a helical membrane-spanning segment. Over 161 to 169 (FGQKCYLGD) the chain is Cytoplasmic. The chain crosses the membrane as a helical span at residues 170-184 (TWNRLDFFIVMAGMM). The Extracellular segment spans residues 185-193 (EYSLDGHNV). Residues Asp189 and His191 each contribute to the Zn(2+) site. An N-linked (GlcNAc...) asparagine glycan is attached at Asn192. Residues 194–212 (SLSAIRTVRVLRPLRAINR) form a helical membrane-spanning segment. At 213–232 (VPSMRILVTLLLDTLPMLGN) the chain is on the cytoplasmic side. Residues 233–253 (VLLLCFFVFFIFGIVGVQLWA) form a helical membrane-spanning segment. Residues 254 to 394 (GLLRNRCFLD…YYVMDAHSFY (141 aa)) lie on the Extracellular side of the membrane. Asn271 carries an N-linked (GlcNAc...) asparagine glycan. The chain crosses the membrane as a helical span at residues 395–419 (NFIYFILLIIVGSFFMINLCLVVIA). Over 420–790 (TQFSETKQRE…SKLRRIVDSK (371 aa)) the chain is Cytoplasmic. Disordered regions lie at residues 490–573 (VDPS…SESV), 618–656 (PSGAVNSKGSTSSRPKGLRSAGTPGATAHSPLSLGSPSP), and 737–761 (GDCRDPVQQPHEGGTPGHGNERWRP). A compositionally biased stretch (basic residues) spans 500–532 (GPRRRPRRAGRRTASVHHLVYHHHHHHHHHYHF). A compositionally biased stretch (pro residues) spans 557-566 (PPSPPSPGHG). The segment covering 621–631 (AVNSKGSTSSR) has biased composition (polar residues). The stretch at 776-1015 (WASFSSKLRR…LLVAILVEGF (240 aa)) is one II repeat. The chain crosses the membrane as a helical span at residues 791-811 (YFNRGIMAAILVNTLSMGVEY). Over 812-824 (HEQPDELTNALEI) the chain is Extracellular. The helical transmembrane segment at 825-846 (SNIVFTSMFALEMLLKLLACGP) threads the bilayer. The Cytoplasmic portion of the chain corresponds to 847–852 (LGYIRN). Residues 853-871 (PYNIFDGIVVIISVWEIVG) form a helical membrane-spanning segment. The Extracellular segment spans residues 872–879 (QADGGLSV). Residues 880 to 903 (LRTFRLLRVLKLVRFLPALRRQLV) traverse the membrane as a helical segment. Residues 904-914 (VLMRTMDNVAT) lie on the Cytoplasmic side of the membrane. Residues 915–935 (FCMLLMLFIFIFSILGMHLFG) form a helical membrane-spanning segment. Residues 936-987 (CKFSLKTDSGDTVPDRKNFDSLLWAIVTVFQILTQEDWNVVLYNGMASTSSW) lie on the Extracellular side of the membrane. The helical transmembrane segment at 988-1012 (AALYFVALMTFGNYVLFNLLVAILV) threads the bilayer. The Cytoplasmic portion of the chain corresponds to 1013-1301 (EGFQAEGDAT…NRLRVSCQKV (289 aa)). Residues 1059 to 1215 (PNGHLEGRGS…HRSTMDLCPP (157 aa)) form a disordered region. Residues 1130–1147 (GPNSAGSSRRSSWNSLGR) are compositionally biased toward low complexity. The segment covering 1199–1209 (RRAESLGHRST) has biased composition (basic and acidic residues). An III repeat occupies 1292 to 1569 (NRLRVSCQKV…MFVGVVVENF (278 aa)). A helical membrane pass occupies residues 1302–1324 (IAHKMFDHVVLVFIFLNCITIAL). Residues 1325 to 1342 (ERPDIDPGSTERAFLSVS) lie on the Extracellular side of the membrane. A helical transmembrane segment spans residues 1343–1363 (NYIFTAIFVVEMMVKVVALGL). Residues 1364-1373 (LWGEHAYLQS) are Cytoplasmic-facing. A helical membrane pass occupies residues 1374–1393 (SWNVLDGLLVLVSLVDIIVA). At 1394-1407 (VASAGGAKILGVLR) the chain is on the extracellular side. The chain crosses the membrane as a helical span at residues 1408-1429 (VLRLLRTLRPLRVISRAPGLKL). Residues 1430-1439 (VVETLISSLR) are Cytoplasmic-facing. The chain crosses the membrane as a helical span at residues 1440–1463 (PIGNIVLICCAFFIIFGILGVQLF). Over 1464–1540 (KGKFYYCEGT…DQQPVQNHNP (77 aa)) the chain is Extracellular. An N-linked (GlcNAc...) asparagine glycan is attached at Asn1477. A helical transmembrane segment spans residues 1541 to 1566 (WMLLYFISFLLIVSFFVLNMFVGVVV). Residues 1567–1627 (ENFHKCRQHQ…RRSIHSLCTS (61 aa)) are Cytoplasmic-facing. One copy of the IV repeat lies at 1613–1874 (DYSHTRRSIH…VVVAVLMKHL (262 aa)). A helical transmembrane segment spans residues 1628–1648 (HYLDLFITFIICLNVITMSME). Residues 1649-1662 (HYNQPKSLDEALKY) are Extracellular-facing. A helical membrane pass occupies residues 1663–1684 (CNYVFTIVFVFEAALKLVAFGF). At 1685–1691 (RRFFKDR) the chain is on the cytoplasmic side. A helical transmembrane segment spans residues 1692 to 1710 (WNQLDLAIVLLSIMGIALE). At 1711 to 1724 (EIEMNAALPINPTI) the chain is on the extracellular side. Residues 1725 to 1748 (IRIMRVLRIARVLKLLKMATGMRA) form a helical membrane-spanning segment. The Cytoplasmic segment spans residues 1749-1762 (LLDTVVQALPQVGN). The helical transmembrane segment at 1763 to 1783 (LGLLFMLLFFIYAALGVELFG) threads the bilayer. Residues 1784–1846 (RLECSEDNPC…KHCLSYLPAL (63 aa)) are Extracellular-facing. Residues 1847 to 1874 (SPVYFVTFVLVAQFVLVNVVVAVLMKHL) traverse the membrane as a helical segment. At 1875-2365 (EESNKEARED…APDDSGDEPV (491 aa)) the chain is on the cytoplasmic side. 2 stretches are compositionally biased toward polar residues: residues 1897–1916 (QGSTAQPPSTAQESQGTEPD) and 1967–1983 (VTSAHSPSLEPRTSFQV). Disordered stretches follow at residues 1897–1920 (QGSTAQPPSTAQESQGTEPDTPNL), 1967–1999 (VTSAHSPSLEPRTSFQVPSAASSPARVSDPLCA), 2053–2264 (APLG…GERW), and 2321–2365 (ELSM…DEPV). The span at 2092 to 2102 (DDAEAADPADE) shows a compositional bias: acidic residues. Residues 2172 to 2187 (GDGHLESGEVRARASE) are compositionally biased toward basic and acidic residues.

It belongs to the calcium channel alpha-1 subunit (TC 1.A.1.11) family. CACNA1H subfamily. In terms of assembly, interacts (via N-terminal cytoplasmic domain) with STAC. Post-translationally, in response to raising of intracellular calcium, the T-type channels are activated by CaM-kinase II. As to expression, is highly expressed in lumbosacral and thoracolumbar dorsal root ganglion neurons.

The protein resides in the cell membrane. It carries out the reaction Ca(2+)(in) = Ca(2+)(out). Its function is as follows. Voltage-sensitive calcium channel that gives rise to T-type calcium currents. T-type calcium channels belong to the 'low-voltage activated (LVA)' group. A particularity of this type of channel is an opening at quite negative potentials, and a voltage-dependent inactivation. T-type channels serve pacemaking functions in both central neurons and cardiac nodal cells and support calcium signaling in secretory cells and vascular smooth muscle. They may also be involved in the modulation of firing patterns of neurons. In the adrenal zona glomerulosa, participates in the signaling pathway leading to aldosterone production in response to either AGT/angiotensin II, or hyperkalemia. The sequence is that of Voltage-dependent T-type calcium channel subunit alpha-1H (Cacna1h) from Mus musculus (Mouse).